The sequence spans 340 residues: Beta-D-galactofuranosidase xynD (340 aa).

The first 24 residues, 1 to 24 (MKHHNYYPSTCLSILPFLLPLTMS), serve as a signal peptide directing secretion. The active-site Proton acceptor is the D51. Residues N96 and N165 are each glycosylated (N-linked (GlcNAc...) asparagine). Residue E222 is the Proton donor of the active site. N-linked (GlcNAc...) asparagine glycans are attached at residues N302 and N328.

The protein belongs to the glycosyl hydrolase 43 family.

The protein localises to the secreted. Its pathway is glycan degradation. Functionally, glycoside hydrolase family 43 beta-D-galactofuranosidase involved in the degradation of beta-galactofuranoside (Galf)-containing glycans such as galactomannan or O-glycans. Is not active on beta-1,5- or beta-1,6-linked beta-D-galactofuranose (Galf) residues. This Aspergillus niger (strain ATCC MYA-4892 / CBS 513.88 / FGSC A1513) protein is Beta-D-galactofuranosidase xynD.